Reading from the N-terminus, the 200-residue chain is Snake venom metalloproteinase rhomb-I (200 aa).

The 197-residue stretch at 4-200 (KYIELVVVAD…RKPQCILNKP (197 aa)) folds into the Peptidase M12B domain. 2 residues coordinate Ca(2+): E7 and D91. Cystine bridges form between C115–C195, C155–C179, and C157–C162. H140 contacts Zn(2+). Residue E141 is part of the active site. H144 and H150 together coordinate Zn(2+). C195 and N198 together coordinate Ca(2+).

In terms of assembly, monomer. Zn(2+) serves as cofactor. Expressed by the venom gland.

It is found in the secreted. Snake venom zinc metalloproteinase that induces hemorrhage. The polypeptide is Snake venom metalloproteinase rhomb-I (Lachesis muta rhombeata (Bushmaster)).